Reading from the N-terminus, the 398-residue chain is UDP-N-acetylglucosamine--N-acetylmuramyl-(pentapeptide) pyrophosphoryl-undecaprenol N-acetylglucosamine transferase (398 aa).

UDP-N-acetyl-alpha-D-glucosamine is bound by residues 15–17 (TGG), asparagine 125, arginine 168, serine 196, and glutamine 297.

The protein belongs to the glycosyltransferase 28 family. MurG subfamily.

The protein resides in the cell inner membrane. It carries out the reaction di-trans,octa-cis-undecaprenyl diphospho-N-acetyl-alpha-D-muramoyl-L-alanyl-D-glutamyl-meso-2,6-diaminopimeloyl-D-alanyl-D-alanine + UDP-N-acetyl-alpha-D-glucosamine = di-trans,octa-cis-undecaprenyl diphospho-[N-acetyl-alpha-D-glucosaminyl-(1-&gt;4)]-N-acetyl-alpha-D-muramoyl-L-alanyl-D-glutamyl-meso-2,6-diaminopimeloyl-D-alanyl-D-alanine + UDP + H(+). The protein operates within cell wall biogenesis; peptidoglycan biosynthesis. In terms of biological role, cell wall formation. Catalyzes the transfer of a GlcNAc subunit on undecaprenyl-pyrophosphoryl-MurNAc-pentapeptide (lipid intermediate I) to form undecaprenyl-pyrophosphoryl-MurNAc-(pentapeptide)GlcNAc (lipid intermediate II). The chain is UDP-N-acetylglucosamine--N-acetylmuramyl-(pentapeptide) pyrophosphoryl-undecaprenol N-acetylglucosamine transferase from Erythrobacter litoralis (strain HTCC2594).